Consider the following 258-residue polypeptide: MSDLKAAALRALKLMDLTTLNDNDTDEAVIALCKNAKTAVGNTAAVCIYPRFIPIAKKTLREQGTPEVRIATVTNFPHGNDDIEIAVAETKAAVAYGADEVDVVFPYRALIAGDETTGFELVKQCKEACGDVLLKVIIETGELKEEALIKKASQICIEAGANFIKTSTGKVPVNATPEYARMMLEVIRDMDVAKTVGFKPAGGVRTAEDAQAYLAMADEILGDDWADNMHYRFGASSLLTNLLNTLEVTEETADPSAY.

The active-site Proton donor/acceptor is Asp102. Catalysis depends on Lys165, which acts as the Schiff-base intermediate with acetaldehyde. The active-site Proton donor/acceptor is Lys199.

This sequence belongs to the DeoC/FbaB aldolase family. DeoC type 2 subfamily.

The protein resides in the cytoplasm. The enzyme catalyses 2-deoxy-D-ribose 5-phosphate = D-glyceraldehyde 3-phosphate + acetaldehyde. It participates in carbohydrate degradation; 2-deoxy-D-ribose 1-phosphate degradation; D-glyceraldehyde 3-phosphate and acetaldehyde from 2-deoxy-alpha-D-ribose 1-phosphate: step 2/2. Its function is as follows. Catalyzes a reversible aldol reaction between acetaldehyde and D-glyceraldehyde 3-phosphate to generate 2-deoxy-D-ribose 5-phosphate. This is Deoxyribose-phosphate aldolase from Aliivibrio fischeri (strain MJ11) (Vibrio fischeri).